Consider the following 475-residue polypeptide: Ankyrin repeat, SAM and basic leucine zipper domain-containing protein 1 (475 aa).

The interval 1–25 is disordered; it reads MAAGALRGLPVAGGGESSESEDDGW. Serine 17, serine 18, and serine 20 each carry phosphoserine. 6 ANK repeats span residues 45-74, 78-107, 110-144, 148-177, 181-210, and 214-243; these read EKKE…SVDS, YGWT…NASF, DKQS…DPNV, RLMT…EVNT, NGYT…NKML, and DGKM…PLEG. The SAM domain occupies 272–334; that stretch reads SYTAFGDLEV…KILAALKELQ (63 aa).

In terms of assembly, interacts with DDX4, PIWIL1, RANBP9 and TDRD1.

The protein localises to the cytoplasm. In terms of biological role, plays a central role during spermatogenesis by repressing transposable elements and preventing their mobilization, which is essential for the germline integrity. Acts via the piRNA metabolic process, which mediates the repression of transposable elements during meiosis by forming complexes composed of piRNAs and Piwi proteins and governs the methylation and subsequent repression of transposons. Its association with pi-bodies suggests a participation in the primary piRNAs metabolic process. Required prior to the pachytene stage to facilitate the production of multiple types of piRNAs, including those associated with repeats involved in the regulation of retrotransposons. May act by mediating protein-protein interactions during germ cell maturation. The protein is Ankyrin repeat, SAM and basic leucine zipper domain-containing protein 1 (ASZ1) of Pongo abelii (Sumatran orangutan).